A 625-amino-acid chain; its full sequence is ATP-dependent RNA helicase mrh4, mitochondrial (625 aa).

Residues Met-1 to Ala-16 constitute a mitochondrion transit peptide. The segment covering Thr-19–Ser-28 has biased composition (low complexity). The interval Thr-19–Leu-119 is disordered. Residues Asp-90 to Thr-113 are compositionally biased toward basic and acidic residues. The Q motif motif lies at Gln-144–Arg-177. Residues Pro-195–Ile-406 form the Helicase ATP-binding domain. Ala-208–Thr-215 contributes to the ATP binding site. The DEAD box motif lies at Asp-353–Asp-356. The 173-residue stretch at Glu-453 to Val-625 folds into the Helicase C-terminal domain.

This sequence belongs to the DEAD box helicase family. MRH4 subfamily.

Its subcellular location is the mitochondrion. The catalysed reaction is ATP + H2O = ADP + phosphate + H(+). Its function is as follows. ATP-binding RNA helicase involved in mitochondrial RNA metabolism. Required for maintenance of mitochondrial DNA. The protein is ATP-dependent RNA helicase mrh4, mitochondrial (drh-15) of Neurospora crassa (strain ATCC 24698 / 74-OR23-1A / CBS 708.71 / DSM 1257 / FGSC 987).